The following is a 452-amino-acid chain: Exodeoxyribonuclease 7 large subunit (452 aa).

It belongs to the XseA family. In terms of assembly, heterooligomer composed of large and small subunits.

The protein localises to the cytoplasm. It carries out the reaction Exonucleolytic cleavage in either 5'- to 3'- or 3'- to 5'-direction to yield nucleoside 5'-phosphates.. Functionally, bidirectionally degrades single-stranded DNA into large acid-insoluble oligonucleotides, which are then degraded further into small acid-soluble oligonucleotides. This is Exodeoxyribonuclease 7 large subunit from Bacillus cereus (strain ATCC 10987 / NRS 248).